The primary structure comprises 74 residues: Omega-conotoxin-like protein 1 (74 aa).

A signal peptide spans 1-20; the sequence is MSKFILLVCILLLTTNIVSA. 3 disulfides stabilise this stretch: cysteine 24–cysteine 38, cysteine 31–cysteine 43, and cysteine 37–cysteine 50.

Highly expressed in brain. Is also found in hemolymph.

Its function is as follows. The impact of this protein on the neuronal activity of the honeybee brain is not known. It does not affect apparent movement or hatching of blowfly larvae. However, when injected into fish, it induces a strong reversible paralytic effect. In addition, the presence of this small peptide in the hemolymph of adult drones together with its induction after bacterial infection suggests that this peptide exhibits antibacterial activity. This peptide may act by inhibiting ion channels. This chain is Omega-conotoxin-like protein 1, found in Apis mellifera (Honeybee).